A 541-amino-acid chain; its full sequence is Protein yellow (541 aa).

An N-terminal signal peptide occupies residues 1-21; that stretch reads MFQDKGWILVTLITLVTPSWA. Residues Asn144 and Asn215 are each glycosylated (N-linked (GlcNAc...) asparagine). Residues 443–463 are disordered; that stretch reads QKPQTSWASSPPPPSRTYLPA.

The protein belongs to the major royal jelly protein family.

The protein localises to the secreted. Its function is as follows. Controls the pigmentation pattern of the adult cuticle and larval mouth parts. This Drosophila melanogaster (Fruit fly) protein is Protein yellow (y).